A 379-amino-acid chain; its full sequence is Alcohol dehydrogenase 3 (379 aa).

Residues Cys47, Thr49, His69, Cys99, Cys102, Cys105, Cys113, and Cys177 each contribute to the Zn(2+) site. An alcohol-binding residues include Thr49 and His69. Thr49 contacts NAD(+). Residues 202-207 (GLGAVG), Asp226, Lys231, Thr272, Val295, 295-297 (VGV), Phe322, and Arg372 each bind NAD(+).

This sequence belongs to the zinc-containing alcohol dehydrogenase family. As to quaternary structure, homodimer. The cofactor is Zn(2+).

The protein localises to the cytoplasm. The catalysed reaction is a primary alcohol + NAD(+) = an aldehyde + NADH + H(+). It catalyses the reaction a secondary alcohol + NAD(+) = a ketone + NADH + H(+). This chain is Alcohol dehydrogenase 3 (ADH3), found in Hordeum vulgare (Barley).